Consider the following 498-residue polypeptide: Aminotransferase swnA (498 aa).

It belongs to the class-I pyridoxal-phosphate-dependent aminotransferase family. Pyridoxal 5'-phosphate serves as cofactor.

The protein operates within mycotoxin biosynthesis. Functionally, aminotransferase; part of the gene cluster that mediates the biosynthesis of swainsonine (SW), a cytotoxic fungal alkaloid and a potential cancer therapy drug. Swainsonine production occurs via a multibranched pathway and is dispensable for fungal colonization of plants and infection of insect hosts. The first step of swainsonine biosynthesis is the production of the precursor pipecolic acid (PA) via conversion of L-lysine (Lys) to 1-piperideine-6-carboxylate (P6C) by the aminotransferase swnA, the latter being further reduced to PA by the reductase swnR. PA can be converted from lysine by both the SW biosynthetic cluster and the unclustered genes such as lysine cyclodeaminase. The PKS-NRPS hybrid synthetase swnK uptakes and condensates PA and malonyl-CoA with and without skipping of the ketoreductase (KR) domain in order to produce 3 intermediates, 1-oxoindolizidine, (1S)-1-hydroxyindolizin, and (1R)-1-hydroxyindolizine; with the transisomer (1S)-1-hydroxyindolizin being predominant. The terminal thioester reductase (TE) domain of swnK is involved in reduction of the thioester bond to release the intermediate aldehydes. The oxidoreductase swnN could contribute to the reduction of 1-oxoindolizidine to (1S)-1-hydroxyindolizin and (1R)-1-hydroxyindolizine, contributing to the major route of SW production. The dioxygenase swnH2 would be responsible for the oxidization of (1R)-1-hydroxyindolizine into (1R,2S)-1,2-dihydroxyindolizine and of (1S)-1-hydroxyindolizin to yield both (1R,2S)-1,2-dihydroxyindolizine and (1S,2S)-1,2-dihydroxyindolizine. The dioxygenase swnH1 then performs the conversion of the 1,2-dihydroxyindolizine epimers to SW. The chain is Aminotransferase swnA from Metarhizium robertsii (strain ARSEF 23 / ATCC MYA-3075) (Metarhizium anisopliae (strain ARSEF 23)).